The sequence spans 447 residues: Alpha-1,3-mannosyl-glycoprotein 2-beta-N-acetylglucosaminyltransferase (447 aa).

The Cytoplasmic segment spans residues Met-1 to Thr-6. The chain crosses the membrane as a helical; Signal-anchor for type II membrane protein span at residues Ala-7 to Trp-29. Topologically, residues Thr-30–Asn-447 are lumenal. Cys-115 and Cys-145 are disulfide-bonded. Substrate is bound by residues Arg-117, Asp-144, His-190, and Asp-212. Residue Asp-213 participates in Mn(2+) binding. A disulfide bridge connects residues Cys-239 and Cys-305. The active-site Proton acceptor is the Asp-291. Ser-322 is a substrate binding site.

It belongs to the glycosyltransferase 13 family. Interacts with MGAT4D. Interacts with BRI3. Mn(2+) is required as a cofactor. As to expression, detected in kidney, liver and brain.

Its subcellular location is the golgi apparatus membrane. The protein resides in the cytoplasm. The protein localises to the perinuclear region. It carries out the reaction N(4)-(alpha-D-Man-(1-&gt;3)-[alpha-D-Man-(1-&gt;3)-[alpha-D-Man-(1-&gt;6)]-alpha-D-Man-(1-&gt;6)]-beta-D-Man-(1-&gt;4)-beta-D-GlcNAc-(1-&gt;4)-beta-D-GlcNAc)-L-asparaginyl-[protein] (N-glucan mannose isomer 5A1,2) + UDP-N-acetyl-alpha-D-glucosamine = N(4)-{beta-D-GlcNAc-(1-&gt;2)-alpha-D-Man-(1-&gt;3)-[alpha-D-Man-(1-&gt;3)-[alpha-D-Man-(1-&gt;6)]-alpha-D-Man-(1-&gt;6)]-beta-D-Man-(1-&gt;4)-beta-D-GlcNAc-(1-&gt;4)-beta-D-GlcNAc}-L-asparaginyl-[protein] + UDP + H(+). It participates in protein modification; protein glycosylation. In terms of biological role, initiates complex N-linked carbohydrate formation. Essential for the conversion of high-mannose to hybrid and complex N-glycans. This chain is Alpha-1,3-mannosyl-glycoprotein 2-beta-N-acetylglucosaminyltransferase (Mgat1), found in Mus musculus (Mouse).